The sequence spans 185 residues: Ribosome-recycling factor (185 aa).

The protein belongs to the RRF family.

It is found in the cytoplasm. Responsible for the release of ribosomes from messenger RNA at the termination of protein biosynthesis. May increase the efficiency of translation by recycling ribosomes from one round of translation to another. This is Ribosome-recycling factor from Vibrio campbellii (strain ATCC BAA-1116).